A 218-amino-acid chain; its full sequence is MSLGILGKKLGMSQLFDDQGRAVPVTLIEAGPCRITQLKSADTDGYAAVQIGFQLIREKLINKPSKGHLAKSGNDLLRHLREYRVENSSEFELGASITVDDFEKGQKVDVSGDTMGRGFAGYQKRHGFSRGPMSHGSKNHRLPGSIGAGTTPGRVYPGKRMAGRMGGKKVTTRALEILKIDTNHNLLVVKGSVPGKPGSLLNIRPAKRVGVSIQQGGE.

A disordered region spans residues 127–167 (GFSRGPMSHGSKNHRLPGSIGAGTTPGRVYPGKRMAGRMGG).

This sequence belongs to the universal ribosomal protein uL3 family. In terms of assembly, part of the 50S ribosomal subunit. Forms a cluster with proteins L14 and L19.

Functionally, one of the primary rRNA binding proteins, it binds directly near the 3'-end of the 23S rRNA, where it nucleates assembly of the 50S subunit. In Prochlorococcus marinus (strain NATL1A), this protein is Large ribosomal subunit protein uL3.